A 96-amino-acid chain; its full sequence is Protein Vpr (96 aa).

The homooligomerization stretch occupies residues 1 to 42; the sequence is MEQAPEDQGPQREPHNEWTLELLEELKNEAVRHFPRIWLHGL. Phosphoserine; by host occurs at positions 79, 94, and 96.

This sequence belongs to the HIV-1 VPR protein family. Homooligomer, may form homodimer. Interacts with p6-gag region of the Pr55 Gag precursor protein through a (Leu-X-X)4 motif near the C-terminus of the P6gag protein. Interacts with host UNG. May interact with host RAD23A/HHR23A. Interacts with host VPRBP/DCAF1, leading to hijack the CUL4A-RBX1-DDB1-DCAF1/VPRBP complex, mediating ubiquitination of host proteins such as TERT and ZGPAT and arrest of the cell cycle in G2 phase. In terms of processing, phosphorylated on several residues by host. These phosphorylations regulate VPR activity for the nuclear import of the HIV-1 pre-integration complex.

It is found in the virion. The protein resides in the host nucleus. Its subcellular location is the host extracellular space. Functionally, during virus entry, plays a role in the transport of the viral pre-integration (PIC) complex to the host nucleus. This function is crucial for viral infection of non-dividing macrophages. May act directly at the nuclear pore complex, by binding nucleoporins phenylalanine-glycine (FG)-repeat regions. In terms of biological role, during virus replication, may deplete host UNG protein, and incude G2-M cell cycle arrest. Acts by targeting specific host proteins for degradation by the 26S proteasome, through association with the cellular CUL4A-DDB1 E3 ligase complex by direct interaction with host VPRPB/DCAF-1. Cell cycle arrest reportedly occurs within hours of infection and is not blocked by antiviral agents, suggesting that it is initiated by the VPR carried into the virion. Additionally, VPR induces apoptosis in a cell cycle dependent manner suggesting that these two effects are mechanistically linked. Detected in the serum and cerebrospinal fluid of AIDS patient, VPR may also induce cell death to bystander cells. In Homo sapiens (Human), this protein is Protein Vpr.